Consider the following 345-residue polypeptide: uncharacterized protein (345 aa).

Disordered stretches follow at residues 1–24 and 296–345; these read MGLE…ENRK and MTAH…LNES. The span at 304 to 323 shows a compositional bias: acidic residues; it reads SDYDNDDDTDGIINETDYEL. Positions 324-345 are enriched in polar residues; that stretch reads DTSQSEFATLTTSSNKSILNES.

This is an uncharacterized protein from Schizosaccharomyces pombe (strain 972 / ATCC 24843) (Fission yeast).